The following is a 161-amino-acid chain: Globin CTT-VIIB-5/CTT-VIIB-9 (161 aa).

The N-terminal stretch at 1–16 (MKFFAVLALCIVGAIA) is a signal peptide. Residues 18–161 (PLTADEASLV…NTFAIVVPRL (144 aa)) enclose the Globin domain. Heme b is bound by residues His76 and His111.

It belongs to the globin family. In terms of assembly, homodimer.

This Chironomus thummi thummi (Midge) protein is Globin CTT-VIIB-5/CTT-VIIB-9 (CTT-7B5).